The following is a 904-amino-acid chain: Auxilin-related protein 1 (904 aa).

Disordered regions lie at residues 46-99 (AAGK…FDYD), 150-731 (SSIS…NLRK), and 749-776 (SASQSGGFQDVDGETEERRRARLERHQR). The span at 59-69 (DPGRDGDDLLF) shows a compositional bias: basic and acidic residues. A compositionally biased stretch (low complexity) spans 81–95 (YGSSSGDSRSPSAPA). The segment covering 178-188 (KGADSDREEKG) has biased composition (basic and acidic residues). The span at 201–215 (RTSSPPSKRTTSETT) shows a compositional bias: low complexity. Positions 232–244 (VEEDPFVVLEESE) are enriched in acidic residues. The span at 245-271 (STPREPSRTDPLDDIGKFNSRKTDHSS) shows a compositional bias: basic and acidic residues. Residues 370-383 (SAPPPTRPPPPRPT) show a composition bias toward pro residues. Residues 394 to 419 (SIPTSAYHSHVPSSGRASVNSPTASQ) show a composition bias toward polar residues. A coiled-coil region spans residues 456–663 (SAAAMKDAMD…AAAEARGRAA (208 aa)). Composition is skewed to basic and acidic residues over residues 462–570 (DAMD…EAHA) and 581–660 (TDAR…EARG). Residues 619 to 640 (REKAEKAAAEAKERANAEAREK) enclose the R domain. Over residues 661–673 (RAAAQAKAKQQQE) the composition is skewed to low complexity. Over residues 674-697 (NTNDLDSFFSSISRPNSAPRQRTN) the composition is skewed to polar residues. Positions 762-804 (ETEERRRARLERHQRTQERAAKALAEKNERDLQVQREQVEKDR) form a coiled coil. Positions 764–776 (EERRRARLERHQR) are enriched in basic and acidic residues. The J domain occupies 839-904 (CGWQPVSLTD…WNKFNSEELF (66 aa)).

In terms of assembly, interacts with SH3P1.

It is found in the cell membrane. Its subcellular location is the golgi apparatus. The protein localises to the trans-Golgi network. It localises to the endoplasmic reticulum. The protein resides in the cytoplasmic vesicle. Functionally, promotes uncoating of clathrin-coated vesicles. May interact directly with clathrin. This chain is Auxilin-related protein 1, found in Arabidopsis thaliana (Mouse-ear cress).